We begin with the raw amino-acid sequence, 271 residues long: 3-methyl-2-oxobutanoate hydroxymethyltransferase (271 aa).

Asp-42 and Asp-86 together coordinate Mg(2+). Residues 42-43, Asp-86, and Lys-116 each bind 3-methyl-2-oxobutanoate; that span reads DS. Position 118 (Glu-118) interacts with Mg(2+). Glu-185 functions as the Proton acceptor in the catalytic mechanism.

Belongs to the PanB family. Homodecamer; pentamer of dimers. Mg(2+) is required as a cofactor.

Its subcellular location is the cytoplasm. The catalysed reaction is 3-methyl-2-oxobutanoate + (6R)-5,10-methylene-5,6,7,8-tetrahydrofolate + H2O = 2-dehydropantoate + (6S)-5,6,7,8-tetrahydrofolate. It participates in cofactor biosynthesis; (R)-pantothenate biosynthesis; (R)-pantoate from 3-methyl-2-oxobutanoate: step 1/2. Catalyzes the reversible reaction in which hydroxymethyl group from 5,10-methylenetetrahydrofolate is transferred onto alpha-ketoisovalerate to form ketopantoate. This chain is 3-methyl-2-oxobutanoate hydroxymethyltransferase, found in Synechococcus sp. (strain CC9605).